A 112-amino-acid polypeptide reads, in one-letter code: uncharacterized protein (112 aa).

This is an uncharacterized protein from Bacillus subtilis (strain 168).